A 626-amino-acid polypeptide reads, in one-letter code: Grainyhead-like protein 3 homolog (626 aa).

The transcription activation stretch occupies residues 30-95 (EAWKTYLENP…QGKRYYHGME (66 aa)). The region spanning 226 to 460 (SLKSDFEYTL…DLETPPVLFI (235 aa)) is the Grh/CP2 DB domain.

It belongs to the grh/CP2 family. Grainyhead subfamily. As to quaternary structure, homodimer, also forms heterodimers with GRHL1 and GRHL2. Interacts with LMO4. Expressed in brain, colon, pancreas, placenta and kidney. Isoform 1 is expressed in lung and tonsil. Isoform 2 is prostate-specific.

It localises to the nucleus. Its function is as follows. Transcription factor playing important roles in primary neurulation and in the differentiation of stratified epithelia of both ectodermal and endodermal origin. Binds directly to the consensus DNA sequence 5'-AACCGGTT-3' acting as an activator and repressor on distinct target genes. xhibits functional redundancy with GRHL2 in epidermal morphogenetic events and epidermal wound repair. Exhibits functional redundancy with GRHL2 in epidermal morphogenetic events and epidermal wound repair but is essential to form the epidermal barrier with TGM3 as critical direct target gene among others. Despite being dispensable during normal epidermal homeostasis in the adulthood, is again required for barrier repair after immune-mediated epidermal damage, regulates distinct gene batteries in embryonic epidermal differentiation and adult epidermal barrier reformation after injury. Plays unique and cooperative roles with GRHL2 in establishing distinct zones of primary neurulation. Essential for spinal closure, functions cooperatively with GRHL2 in closure 2 (forebrain/midbrain boundary) and posterior neuropore closure. Also required for proper development of the oral periderm. No genetic interaction with GRHL3, no functional cooperativity due to diverse target gene selectivity. This chain is Grainyhead-like protein 3 homolog, found in Homo sapiens (Human).